The chain runs to 293 residues: Methylsterol monooxygenase 1 (293 aa).

The next 2 helical transmembrane spans lie at 55–75 (LIVH…FQFI) and 100–120 (KILF…YYFT). Positions 144-274 (GCAVIEDTWH…FTWWDKLFGT (131 aa)) constitute a Fatty acid hydroxylase domain. Positions 157–161 (HRLLH) match the Histidine box-1 motif. A Histidine box-2 motif is present at residues 170 to 174 (HKVHH). A helical membrane pass occupies residues 199 to 219 (FFIGIVLLCDHVILLWAWVTI). A Histidine box-3 motif is present at residues 249–255 (HHDFHHM).

It belongs to the sterol desaturase family. Fe cation serves as cofactor. In terms of processing, ubiquitinated by MARCHF6, leading to proteasomal degradation.

Its subcellular location is the endoplasmic reticulum membrane. It carries out the reaction 4,4-dimethyl-5alpha-cholest-7-en-3beta-ol + 6 Fe(II)-[cytochrome b5] + 3 O2 + 5 H(+) = 4alpha-carboxy-4beta-methyl-5alpha-cholest-7-ene-3beta-ol + 6 Fe(III)-[cytochrome b5] + 4 H2O. The catalysed reaction is 4,4-dimethyl-5alpha-cholesta-8,24-dien-3beta-ol + 6 Fe(II)-[cytochrome b5] + 3 O2 + 5 H(+) = 4beta-methylzymosterol-4alpha-carboxylate + 6 Fe(III)-[cytochrome b5] + 4 H2O. It catalyses the reaction 4alpha-methylzymosterol + 6 Fe(II)-[cytochrome b5] + 3 O2 + 5 H(+) = 4alpha-carboxyzymosterol + 6 Fe(III)-[cytochrome b5] + 4 H2O. The enzyme catalyses 4alpha-methyl-5alpha-cholest-7-en-3beta-ol + 6 Fe(II)-[cytochrome b5] + 3 O2 + 5 H(+) = 4alpha-carboxy-5alpha-cholest-7-en-3beta-ol + 6 Fe(III)-[cytochrome b5] + 4 H2O. It carries out the reaction 4,4-dimethyl-5alpha-cholest-8-en-3beta-ol + 6 Fe(II)-[cytochrome b5] + 3 O2 + 5 H(+) = 4alpha-carboxy-4beta-methyl-5alpha-cholest-8-en-3beta-ol + 6 Fe(III)-[cytochrome b5] + 4 H2O. The catalysed reaction is 4alpha-methyl-5alpha-cholest-8-en-3beta-ol + 6 Fe(II)-[cytochrome b5] + 3 O2 + 5 H(+) = 4alpha-carboxy-5alpha-cholest-8-ene-3beta-ol + 6 Fe(III)-[cytochrome b5] + 4 H2O. Its pathway is steroid biosynthesis; zymosterol biosynthesis; zymosterol from lanosterol: step 3/6. The protein operates within steroid biosynthesis; cholesterol biosynthesis. Catalyzes the three-step monooxygenation required for the demethylation of 4,4-dimethyl and 4alpha-methylsterols, which can be subsequently metabolized to cholesterol. The chain is Methylsterol monooxygenase 1 (Msmo1) from Mus musculus (Mouse).